Here is a 474-residue protein sequence, read N- to C-terminus: UDP-N-acetylmuramate--L-alanine ligase (474 aa).

116-122 (GTHGKTT) serves as a coordination point for ATP.

Belongs to the MurCDEF family.

The protein resides in the cytoplasm. It carries out the reaction UDP-N-acetyl-alpha-D-muramate + L-alanine + ATP = UDP-N-acetyl-alpha-D-muramoyl-L-alanine + ADP + phosphate + H(+). Its pathway is cell wall biogenesis; peptidoglycan biosynthesis. Functionally, cell wall formation. This Hyphomonas neptunium (strain ATCC 15444) protein is UDP-N-acetylmuramate--L-alanine ligase.